A 253-amino-acid polypeptide reads, in one-letter code: Imidazole glycerol phosphate synthase subunit HisF (253 aa).

Residues D11 and D130 contribute to the active site.

This sequence belongs to the HisA/HisF family. In terms of assembly, heterodimer of HisH and HisF.

The protein localises to the cytoplasm. The catalysed reaction is 5-[(5-phospho-1-deoxy-D-ribulos-1-ylimino)methylamino]-1-(5-phospho-beta-D-ribosyl)imidazole-4-carboxamide + L-glutamine = D-erythro-1-(imidazol-4-yl)glycerol 3-phosphate + 5-amino-1-(5-phospho-beta-D-ribosyl)imidazole-4-carboxamide + L-glutamate + H(+). It participates in amino-acid biosynthesis; L-histidine biosynthesis; L-histidine from 5-phospho-alpha-D-ribose 1-diphosphate: step 5/9. Functionally, IGPS catalyzes the conversion of PRFAR and glutamine to IGP, AICAR and glutamate. The HisF subunit catalyzes the cyclization activity that produces IGP and AICAR from PRFAR using the ammonia provided by the HisH subunit. The sequence is that of Imidazole glycerol phosphate synthase subunit HisF from Clostridium botulinum (strain Alaska E43 / Type E3).